The chain runs to 461 residues: Cysteine--tRNA ligase (461 aa).

Cysteine 30 is a binding site for Zn(2+). The 'HIGH' region signature appears at 32–42 (VTIYDLCHIGH). Zn(2+) is bound by residues cysteine 211, histidine 236, and glutamate 240. The 'KMSKS' region signature appears at 268 to 272 (KMSKS). Lysine 271 is an ATP binding site.

It belongs to the class-I aminoacyl-tRNA synthetase family. As to quaternary structure, monomer. It depends on Zn(2+) as a cofactor.

It is found in the cytoplasm. The enzyme catalyses tRNA(Cys) + L-cysteine + ATP = L-cysteinyl-tRNA(Cys) + AMP + diphosphate. The polypeptide is Cysteine--tRNA ligase (Shewanella sp. (strain W3-18-1)).